A 421-amino-acid polypeptide reads, in one-letter code: Serine hydroxymethyltransferase (421 aa).

(6S)-5,6,7,8-tetrahydrofolate-binding positions include leucine 123 and 127–129; that span reads GHL. Lysine 232 bears the N6-(pyridoxal phosphate)lysine mark.

This sequence belongs to the SHMT family. Homodimer. Requires pyridoxal 5'-phosphate as cofactor.

It localises to the cytoplasm. The enzyme catalyses (6R)-5,10-methylene-5,6,7,8-tetrahydrofolate + glycine + H2O = (6S)-5,6,7,8-tetrahydrofolate + L-serine. It functions in the pathway one-carbon metabolism; tetrahydrofolate interconversion. Its pathway is amino-acid biosynthesis; glycine biosynthesis; glycine from L-serine: step 1/1. Catalyzes the reversible interconversion of serine and glycine with tetrahydrofolate (THF) serving as the one-carbon carrier. This reaction serves as the major source of one-carbon groups required for the biosynthesis of purines, thymidylate, methionine, and other important biomolecules. Also exhibits THF-independent aldolase activity toward beta-hydroxyamino acids, producing glycine and aldehydes, via a retro-aldol mechanism. This is Serine hydroxymethyltransferase from Ehrlichia ruminantium (strain Gardel).